The sequence spans 277 residues: 3-methyl-2-oxobutanoate hydroxymethyltransferase (277 aa).

D53 and D96 together coordinate Mg(2+). Residues 53 to 54 (DS), D96, and K126 each bind 3-methyl-2-oxobutanoate. Mg(2+) is bound at residue E128. The Proton acceptor role is filled by E195.

It belongs to the PanB family. As to quaternary structure, homodecamer; pentamer of dimers. Mg(2+) is required as a cofactor.

The protein localises to the cytoplasm. It catalyses the reaction 3-methyl-2-oxobutanoate + (6R)-5,10-methylene-5,6,7,8-tetrahydrofolate + H2O = 2-dehydropantoate + (6S)-5,6,7,8-tetrahydrofolate. It participates in cofactor biosynthesis; (R)-pantothenate biosynthesis; (R)-pantoate from 3-methyl-2-oxobutanoate: step 1/2. Functionally, catalyzes the reversible reaction in which hydroxymethyl group from 5,10-methylenetetrahydrofolate is transferred onto alpha-ketoisovalerate to form ketopantoate. This chain is 3-methyl-2-oxobutanoate hydroxymethyltransferase, found in Chlorobium luteolum (strain DSM 273 / BCRC 81028 / 2530) (Pelodictyon luteolum).